Here is a 220-residue protein sequence, read N- to C-terminus: Response regulator protein TmoT (220 aa).

Residues 21–135 (VIYIVDDDNA…DLLGAIRTAL (115 aa)) enclose the Response regulatory domain. A 4-aspartylphosphate modification is found at Asp-70. One can recognise an HTH luxR-type domain in the interval 151–216 (LKASYESLSK…DLVRVTERLK (66 aa)). The segment at residues 175-194 (NKQTALELDISEATVKVHRH) is a DNA-binding region (H-T-H motif).

Phosphorylated by TmoS.

It is found in the cytoplasm. Member of the two-component regulatory system TmoS/TmoT involved in the regulation of toluene degradation. Induces expression of tmoX operon. The polypeptide is Response regulator protein TmoT (tmoT) (Ectopseudomonas mendocina (Pseudomonas mendocina)).